The following is a 179-amino-acid chain: ATP synthase subunit delta (179 aa).

This sequence belongs to the ATPase delta chain family. F-type ATPases have 2 components, F(1) - the catalytic core - and F(0) - the membrane proton channel. F(1) has five subunits: alpha(3), beta(3), gamma(1), delta(1), epsilon(1). F(0) has three main subunits: a(1), b(2) and c(10-14). The alpha and beta chains form an alternating ring which encloses part of the gamma chain. F(1) is attached to F(0) by a central stalk formed by the gamma and epsilon chains, while a peripheral stalk is formed by the delta and b chains.

The protein resides in the cell membrane. In terms of biological role, f(1)F(0) ATP synthase produces ATP from ADP in the presence of a proton or sodium gradient. F-type ATPases consist of two structural domains, F(1) containing the extramembraneous catalytic core and F(0) containing the membrane proton channel, linked together by a central stalk and a peripheral stalk. During catalysis, ATP synthesis in the catalytic domain of F(1) is coupled via a rotary mechanism of the central stalk subunits to proton translocation. This protein is part of the stalk that links CF(0) to CF(1). It either transmits conformational changes from CF(0) to CF(1) or is implicated in proton conduction. In Clostridium botulinum (strain Loch Maree / Type A3), this protein is ATP synthase subunit delta.